Reading from the N-terminus, the 353-residue chain is Guanine nucleotide-binding protein subunit alpha (353 aa).

Residue Gly2 is the site of N-myristoyl glycine attachment. Cys3 carries the S-palmitoyl cysteine lipid modification. The 322-residue stretch at Asn32–Ile353 folds into the G-alpha domain. The tract at residues Lys35–Thr48 is G1 motif. 14 residues coordinate GTP: Glu43, Ser44, Gly45, Lys46, Ser47, Thr48, Asp150, Leu175, Thr181, Gly203, Asn269, Lys270, Asp272, and Ala325. Residue Ser47 coordinates Mg(2+). A G2 motif region spans residues Asp173–Thr181. Thr181 contributes to the Mg(2+) binding site. The G3 motif stretch occupies residues Tyr196–Arg205. The G4 motif stretch occupies residues Ile265–Asp272. Positions Thr323–Thr328 are G5 motif.

It belongs to the G-alpha family. G(q) subfamily. In terms of assembly, g proteins are composed of 3 units; alpha, beta and gamma. The alpha chain contains the guanine nucleotide binding site. It depends on Mg(2+) as a cofactor.

Its function is as follows. Guanine nucleotide-binding proteins (G proteins) are involved as modulators or transducers in various transmembrane signaling systems. Involved in the mating pathway. The chain is Guanine nucleotide-binding protein subunit alpha (CGA1) from Cochliobolus heterostrophus (strain C4 / ATCC 48331 / race T) (Southern corn leaf blight fungus).